Consider the following 198-residue polypeptide: Putative 3-methyladenine DNA glycosylase (198 aa).

The protein belongs to the DNA glycosylase MPG family.

In Rhizobium johnstonii (strain DSM 114642 / LMG 32736 / 3841) (Rhizobium leguminosarum bv. viciae), this protein is Putative 3-methyladenine DNA glycosylase.